The chain runs to 1033 residues: uncharacterized protein (1033 aa).

4 coiled-coil regions span residues 212-326 (EIFK…KMNN), 405-582 (ILNN…LYKF), 615-771 (LEKE…LKLN), and 797-1019 (KMKI…NIDN).

This is an uncharacterized protein from Plasmodium falciparum (isolate 3D7).